Consider the following 88-residue polypeptide: UPF0335 protein WD_0557 (88 aa).

The protein belongs to the UPF0335 family.

The polypeptide is UPF0335 protein WD_0557 (Wolbachia pipientis wMel).